The following is a 184-amino-acid chain: Photosystem I assembly protein Ycf4 (184 aa).

A run of 2 helical transmembrane segments spans residues 22–42 (FCWA…GTSS) and 57–77 (IIFF…LFIS).

It belongs to the Ycf4 family.

It is found in the plastid. The protein resides in the chloroplast thylakoid membrane. In terms of biological role, seems to be required for the assembly of the photosystem I complex. The chain is Photosystem I assembly protein Ycf4 from Capsella bursa-pastoris (Shepherd's purse).